The primary structure comprises 426 residues: Serine--tRNA ligase (426 aa).

233-235 (TAE) provides a ligand contact to L-serine. 264-266 (RSE) provides a ligand contact to ATP. L-serine is bound at residue Glu287. 351–354 (EISS) provides a ligand contact to ATP. Ser387 contributes to the L-serine binding site.

This sequence belongs to the class-II aminoacyl-tRNA synthetase family. Type-1 seryl-tRNA synthetase subfamily. Homodimer. The tRNA molecule binds across the dimer.

The protein localises to the cytoplasm. It carries out the reaction tRNA(Ser) + L-serine + ATP = L-seryl-tRNA(Ser) + AMP + diphosphate + H(+). It catalyses the reaction tRNA(Sec) + L-serine + ATP = L-seryl-tRNA(Sec) + AMP + diphosphate + H(+). The protein operates within aminoacyl-tRNA biosynthesis; selenocysteinyl-tRNA(Sec) biosynthesis; L-seryl-tRNA(Sec) from L-serine and tRNA(Sec): step 1/1. Its function is as follows. Catalyzes the attachment of serine to tRNA(Ser). Is also able to aminoacylate tRNA(Sec) with serine, to form the misacylated tRNA L-seryl-tRNA(Sec), which will be further converted into selenocysteinyl-tRNA(Sec). This is Serine--tRNA ligase from Ectopseudomonas mendocina (strain ymp) (Pseudomonas mendocina).